The sequence spans 365 residues: Succinyl-diaminopimelate desuccinylase (365 aa).

Zn(2+) is bound at residue His64. Asp66 is an active-site residue. A Zn(2+)-binding site is contributed by Asp95. Residue Glu125 is the Proton acceptor of the active site. Glu126, Glu154, and His339 together coordinate Zn(2+).

Belongs to the peptidase M20A family. DapE subfamily. Homodimer. Zn(2+) is required as a cofactor. It depends on Co(2+) as a cofactor.

The enzyme catalyses N-succinyl-(2S,6S)-2,6-diaminopimelate + H2O = (2S,6S)-2,6-diaminopimelate + succinate. Its pathway is amino-acid biosynthesis; L-lysine biosynthesis via DAP pathway; LL-2,6-diaminopimelate from (S)-tetrahydrodipicolinate (succinylase route): step 3/3. Functionally, catalyzes the hydrolysis of N-succinyl-L,L-diaminopimelic acid (SDAP), forming succinate and LL-2,6-diaminopimelate (DAP), an intermediate involved in the bacterial biosynthesis of lysine and meso-diaminopimelic acid, an essential component of bacterial cell walls. The chain is Succinyl-diaminopimelate desuccinylase from Nautilia profundicola (strain ATCC BAA-1463 / DSM 18972 / AmH).